Here is a 442-residue protein sequence, read N- to C-terminus: tRNA-2-methylthio-N(6)-dimethylallyladenosine synthase (442 aa).

Residues 5–122 (KKVFIKTLGC…LPEMIKRKQS (118 aa)) form the MTTase N-terminal domain. Residues cysteine 14, cysteine 51, cysteine 85, cysteine 159, cysteine 163, and cysteine 166 each coordinate [4Fe-4S] cluster. Residues 145 to 378 (KAEGAKAYVS…DLLNSNAQII (234 aa)) enclose the Radical SAM core domain. The region spanning 380–442 (RQMVGTEQRI…LPNSLRGELI (63 aa)) is the TRAM domain.

It belongs to the methylthiotransferase family. MiaB subfamily. Monomer. Requires [4Fe-4S] cluster as cofactor.

Its subcellular location is the cytoplasm. The enzyme catalyses N(6)-dimethylallyladenosine(37) in tRNA + (sulfur carrier)-SH + AH2 + 2 S-adenosyl-L-methionine = 2-methylsulfanyl-N(6)-dimethylallyladenosine(37) in tRNA + (sulfur carrier)-H + 5'-deoxyadenosine + L-methionine + A + S-adenosyl-L-homocysteine + 2 H(+). Its function is as follows. Catalyzes the methylthiolation of N6-(dimethylallyl)adenosine (i(6)A), leading to the formation of 2-methylthio-N6-(dimethylallyl)adenosine (ms(2)i(6)A) at position 37 in tRNAs that read codons beginning with uridine. This is tRNA-2-methylthio-N(6)-dimethylallyladenosine synthase from Francisella philomiragia subsp. philomiragia (strain ATCC 25017 / CCUG 19701 / FSC 153 / O#319-036).